Consider the following 368-residue polypeptide: Protein Wnt-1 (368 aa).

The N-terminal stretch at 1-25 is a signal peptide; that stretch reads MRGPALLLALRALCALSALRGTARA. Cystine bridges form between Cys-91-Cys-102, Cys-141-Cys-149, Cys-151-Cys-168, Cys-216-Cys-230, Cys-218-Cys-225, Cys-297-Cys-328, Cys-313-Cys-323, Cys-327-Cys-367, Cys-343-Cys-358, Cys-345-Cys-355, and Cys-350-Cys-351. Ser-222 is lipidated: O-palmitoleoyl serine; by PORCN.

This sequence belongs to the Wnt family. In terms of assembly, forms a soluble 1:1 complex with AFM; this prevents oligomerization and is required for prolonged biological activity. The complex with AFM may represent the physiological form in body fluids. Interacts with PORCN. Post-translationally, N-glycosylated. N-glycosylation favors subsequent palmitoleoylation. Palmitoleoylation is required for efficient binding to frizzled receptors. Palmitoleoylation is necessary for proper trafficking to cell surface. Depalmitoleoylated by NOTUM, leading to inhibit Wnt signaling pathway.

Its subcellular location is the secreted. It is found in the extracellular space. The protein localises to the extracellular matrix. In terms of biological role, ligand for members of the frizzled family of seven transmembrane receptors. Acts in the canonical Wnt signaling pathway by promoting beta-catenin-dependent transcriptional activation. Developmental protein that promotes cell proliferation in the developing spinal cord. Has a role in osteoblast function, bone development and bone homeostasis. This chain is Protein Wnt-1 (WNT1), found in Gallus gallus (Chicken).